Here is a 130-residue protein sequence, read N- to C-terminus: Large ribosomal subunit protein bL12 (130 aa).

It belongs to the bacterial ribosomal protein bL12 family. Homodimer. Part of the ribosomal stalk of the 50S ribosomal subunit. Forms a multimeric L10(L12)X complex, where L10 forms an elongated spine to which 2 to 4 L12 dimers bind in a sequential fashion. Binds GTP-bound translation factors.

Forms part of the ribosomal stalk which helps the ribosome interact with GTP-bound translation factors. Is thus essential for accurate translation. The protein is Large ribosomal subunit protein bL12 of Prochlorococcus marinus (strain SARG / CCMP1375 / SS120).